We begin with the raw amino-acid sequence, 331 residues long: ATP-dependent 6-phosphofructokinase (331 aa).

Gly12 provides a ligand contact to ATP. ADP is bound by residues 22–26 (RGVVR) and 55–60 (RYSVSD). Residues 73-74 (RF) and 103-106 (GDGS) contribute to the ATP site. Asp104 is a Mg(2+) binding site. 127–129 (TID) serves as a coordination point for substrate. The active-site Proton acceptor is Asp129. Arg156 serves as a coordination point for ADP. Substrate is bound by residues Arg164 and 171–173 (MGR). ADP-binding positions include 187–189 (GCE), Lys213, and 215–217 (KKH). Residues Glu224, Arg245, and 251 to 254 (HIQR) each bind substrate.

The protein belongs to the phosphofructokinase type A (PFKA) family. ATP-dependent PFK group I subfamily. Prokaryotic clade 'B1' sub-subfamily. Homotetramer. Mg(2+) is required as a cofactor.

The protein localises to the cytoplasm. It carries out the reaction beta-D-fructose 6-phosphate + ATP = beta-D-fructose 1,6-bisphosphate + ADP + H(+). Its pathway is carbohydrate degradation; glycolysis; D-glyceraldehyde 3-phosphate and glycerone phosphate from D-glucose: step 3/4. Its activity is regulated as follows. Allosterically activated by ADP and other diphosphonucleosides, and allosterically inhibited by phosphoenolpyruvate. In terms of biological role, catalyzes the phosphorylation of D-fructose 6-phosphate to fructose 1,6-bisphosphate by ATP, the first committing step of glycolysis. The sequence is that of ATP-dependent 6-phosphofructokinase from Yersinia enterocolitica serotype O:8 / biotype 1B (strain NCTC 13174 / 8081).